Here is a 209-residue protein sequence, read N- to C-terminus: tRNA (guanine-N(7)-)-methyltransferase (209 aa).

D35, E60, N87, and D113 together coordinate S-adenosyl-L-methionine. D113 is a catalytic residue. Residues K117 and D149 each coordinate substrate.

Belongs to the class I-like SAM-binding methyltransferase superfamily. TrmB family.

The enzyme catalyses guanosine(46) in tRNA + S-adenosyl-L-methionine = N(7)-methylguanosine(46) in tRNA + S-adenosyl-L-homocysteine. The protein operates within tRNA modification; N(7)-methylguanine-tRNA biosynthesis. Catalyzes the formation of N(7)-methylguanine at position 46 (m7G46) in tRNA. The sequence is that of tRNA (guanine-N(7)-)-methyltransferase from Prochlorococcus marinus (strain AS9601).